The primary structure comprises 147 residues: Sec-independent protein translocase protein TatB (147 aa).

Residues 1 to 21 (MFDISFSEILVIAAVALIVIG) traverse the membrane as a helical segment. The span at 67–88 (EETGRSIENSVHTELDKFRETV) shows a compositional bias: basic and acidic residues. The interval 67-147 (EETGRSIENS…GVNRERETAE (81 aa)) is disordered. The segment covering 103-117 (APAGESSPPQNSSPA) has biased composition (low complexity).

Belongs to the TatB family. As to quaternary structure, the Tat system comprises two distinct complexes: a TatABC complex, containing multiple copies of TatA, TatB and TatC subunits, and a separate TatA complex, containing only TatA subunits. Substrates initially bind to the TatABC complex, which probably triggers association of the separate TatA complex to form the active translocon.

The protein resides in the cell inner membrane. In terms of biological role, part of the twin-arginine translocation (Tat) system that transports large folded proteins containing a characteristic twin-arginine motif in their signal peptide across membranes. Together with TatC, TatB is part of a receptor directly interacting with Tat signal peptides. TatB may form an oligomeric binding site that transiently accommodates folded Tat precursor proteins before their translocation. The protein is Sec-independent protein translocase protein TatB of Nitrosospira multiformis (strain ATCC 25196 / NCIMB 11849 / C 71).